We begin with the raw amino-acid sequence, 121 residues long: Large ribosomal subunit protein uL14 (121 aa).

This sequence belongs to the universal ribosomal protein uL14 family. In terms of assembly, part of the 50S ribosomal subunit. Forms a cluster with proteins L3 and L19. In the 70S ribosome, L14 and L19 interact and together make contacts with the 16S rRNA in bridges B5 and B8.

Its function is as follows. Binds to 23S rRNA. Forms part of two intersubunit bridges in the 70S ribosome. This chain is Large ribosomal subunit protein uL14, found in Porphyromonas gingivalis (strain ATCC 33277 / DSM 20709 / CIP 103683 / JCM 12257 / NCTC 11834 / 2561).